A 188-amino-acid polypeptide reads, in one-letter code: GTP cyclohydrolase 1 (188 aa).

C78, H81, and C150 together coordinate Zn(2+).

This sequence belongs to the GTP cyclohydrolase I family. Toroid-shaped homodecamer, composed of two pentamers of five dimers.

The enzyme catalyses GTP + H2O = 7,8-dihydroneopterin 3'-triphosphate + formate + H(+). It functions in the pathway cofactor biosynthesis; 7,8-dihydroneopterin triphosphate biosynthesis; 7,8-dihydroneopterin triphosphate from GTP: step 1/1. The polypeptide is GTP cyclohydrolase 1 (Geobacillus kaustophilus (strain HTA426)).